The following is a 140-amino-acid chain: Large ribosomal subunit protein uL11 (140 aa).

Belongs to the universal ribosomal protein uL11 family. In terms of assembly, part of the ribosomal stalk of the 50S ribosomal subunit. Interacts with L10 and the large rRNA to form the base of the stalk. L10 forms an elongated spine to which L12 dimers bind in a sequential fashion forming a multimeric L10(L12)X complex. One or more lysine residues are methylated.

Its function is as follows. Forms part of the ribosomal stalk which helps the ribosome interact with GTP-bound translation factors. The chain is Large ribosomal subunit protein uL11 from Staphylococcus saprophyticus subsp. saprophyticus (strain ATCC 15305 / DSM 20229 / NCIMB 8711 / NCTC 7292 / S-41).